The chain runs to 803 residues: DNA polymerase 2 (803 aa).

It belongs to the DNA polymerase type-B family.

It carries out the reaction DNA(n) + a 2'-deoxyribonucleoside 5'-triphosphate = DNA(n+1) + diphosphate. The chain is DNA polymerase 2 (polB) from Aeropyrum pernix (strain ATCC 700893 / DSM 11879 / JCM 9820 / NBRC 100138 / K1).